Consider the following 194-residue polypeptide: uncharacterized protein (194 aa).

Over residues 77-92 (QTQPQHQTLSQHLPQT) the composition is skewed to polar residues. The segment at 77–96 (QTQPQHQTLSQHLPQTHHTD) is disordered. The chain crosses the membrane as a helical span at residues 169–189 (FWEILLLIILIAVLVYGIYWL).

It is found in the host membrane. The protein resides in the virion. This is an uncharacterized protein from Acanthamoeba polyphaga (Amoeba).